A 511-amino-acid polypeptide reads, in one-letter code: BAR/IMD domain-containing adapter protein 2-like 1 (511 aa).

The 249-residue stretch at 1–249 (MSRGPEEVNR…MNMIEEIKTP (249 aa)) folds into the IMD domain. Residues 115–154 (MNATLKRYQTEHKNKLESLEKSQAELKKIRRKSQGSRNAL) are a coiled coil. 2 positions are modified to phosphothreonine: T248 and T257. 2 positions are modified to phosphoserine: S261 and S281. Positions 302 to 328 (NNPATAAPNSQRVNNSTGTSEDPSLQR) are disordered. The span at 303-328 (NPATAAPNSQRVNNSTGTSEDPSLQR) shows a compositional bias: polar residues. S331 and S354 each carry phosphoserine. In terms of domain architecture, SH3 spans 339–402 (MKKQKVKTIF…PSSYTKLLEE (64 aa)). The residue at position 412 (T412) is a Phosphothreonine. Phosphoserine is present on residues S414, S420, and S422. Residues 451 to 511 (RRADSARTTS…TNDRSAPIIR (61 aa)) are disordered. Positions 483 to 511 (PPFLSGENPFATVKLRPTVTNDRSAPIIR) are binds F-actin.

In terms of assembly, interacts with RAC1. Binds to F-actin. Interacts with FASLG. Interacts (via SH3 domain) with E.coli effector protein EspF(U) (via PXXP motifs). Identified in a complex containing at least WASL, BAIAP2L1 and E.coli EspF(U). Interacts with E.coli intimin receptor Tir. Post-translationally, phosphorylated on tyrosine in response to insulin.

The protein localises to the cytoplasm. Its subcellular location is the cytoskeleton. Its function is as follows. May function as adapter protein. Involved in the formation of clusters of actin bundles. Plays a role in the reorganization of the actin cytoskeleton in response to bacterial infection. The polypeptide is BAR/IMD domain-containing adapter protein 2-like 1 (BAIAP2L1) (Homo sapiens (Human)).